Consider the following 328-residue polypeptide: DNA-directed RNA polymerase subunit alpha (328 aa).

The segment at M1–E232 is alpha N-terminal domain (alpha-NTD). The interval I248–P328 is alpha C-terminal domain (alpha-CTD).

It belongs to the RNA polymerase alpha chain family. In terms of assembly, homodimer. The RNAP catalytic core consists of 2 alpha, 1 beta, 1 beta' and 1 omega subunit. When a sigma factor is associated with the core the holoenzyme is formed, which can initiate transcription.

The catalysed reaction is RNA(n) + a ribonucleoside 5'-triphosphate = RNA(n+1) + diphosphate. DNA-dependent RNA polymerase catalyzes the transcription of DNA into RNA using the four ribonucleoside triphosphates as substrates. The polypeptide is DNA-directed RNA polymerase subunit alpha (Bordetella petrii (strain ATCC BAA-461 / DSM 12804 / CCUG 43448)).